Here is a 151-residue protein sequence, read N- to C-terminus: Large ribosomal subunit protein bL9 (151 aa).

It belongs to the bacterial ribosomal protein bL9 family.

In terms of biological role, binds to the 23S rRNA. The protein is Large ribosomal subunit protein bL9 of Desulforapulum autotrophicum (strain ATCC 43914 / DSM 3382 / VKM B-1955 / HRM2) (Desulfobacterium autotrophicum).